Reading from the N-terminus, the 358-residue chain is Histidinol-phosphate aminotransferase (358 aa).

Lys217 is subject to N6-(pyridoxal phosphate)lysine.

The protein belongs to the class-II pyridoxal-phosphate-dependent aminotransferase family. Histidinol-phosphate aminotransferase subfamily. As to quaternary structure, homodimer. Requires pyridoxal 5'-phosphate as cofactor.

The enzyme catalyses L-histidinol phosphate + 2-oxoglutarate = 3-(imidazol-4-yl)-2-oxopropyl phosphate + L-glutamate. It participates in amino-acid biosynthesis; L-histidine biosynthesis; L-histidine from 5-phospho-alpha-D-ribose 1-diphosphate: step 7/9. The polypeptide is Histidinol-phosphate aminotransferase (Ruminiclostridium cellulolyticum (strain ATCC 35319 / DSM 5812 / JCM 6584 / H10) (Clostridium cellulolyticum)).